The primary structure comprises 652 residues: RNA-binding E3 ubiquitin-protein ligase MEX3C (652 aa).

2 disordered regions span residues 15 to 39 (AAPA…ELEG) and 80 to 136 (QARR…EDRP). Residues 18-33 (APLPQPPPLPPPPPAG) show a composition bias toward pro residues. Positions 101–134 (AELELEVDEEEGEEAELDGELLEEEELEEAEEED) are enriched in acidic residues. KH domains are found at residues 225–286 (TTEC…KREI) and 319–380 (QTTV…REEI). Disordered stretches follow at residues 429-448 (ARMM…SGST) and 506-566 (FEPV…HVGL). Low complexity predominate over residues 430–448 (RMMSNYRNDSSSSLGSGST). Polar residues predominate over residues 519-537 (PSGNMKTQRRGSQPSTPRL). Residues Ser530 and Ser538 each carry the phosphoserine modification. Basic and acidic residues predominate over residues 544–555 (SIEHPLARRVRS). An RING-type zinc finger spans residues 601–641 (CVICFENEVIAALVPCGHNLFCMECANKICEKRTPSCPVCQ).

In terms of assembly, interacts with USP7, which antagonizes the ability to degrade mRNA. In terms of processing, phosphorylated.

Its subcellular location is the nucleus. The protein resides in the cytoplasm. The enzyme catalyses S-ubiquitinyl-[E2 ubiquitin-conjugating enzyme]-L-cysteine + [acceptor protein]-L-lysine = [E2 ubiquitin-conjugating enzyme]-L-cysteine + N(6)-ubiquitinyl-[acceptor protein]-L-lysine.. RNA-binding protein. May be involved in post-transcriptional regulatory mechanisms, modulating levels of some mRNAs by promoting their degradation in a way involving ubiquitin ligase activity. May act as suppressor of replication stress and chromosome missegregation. The polypeptide is RNA-binding E3 ubiquitin-protein ligase MEX3C (Mex3c) (Mus musculus (Mouse)).